Reading from the N-terminus, the 297-residue chain is Probable endonuclease 4 (297 aa).

Zn(2+) contacts are provided by H69, H110, E145, D179, H182, H214, D227, H229, and E259.

Belongs to the AP endonuclease 2 family. Zn(2+) is required as a cofactor.

It catalyses the reaction Endonucleolytic cleavage to 5'-phosphooligonucleotide end-products.. Endonuclease IV plays a role in DNA repair. It cleaves phosphodiester bonds at apurinic or apyrimidinic (AP) sites, generating a 3'-hydroxyl group and a 5'-terminal sugar phosphate. This Listeria monocytogenes serovar 1/2a (strain ATCC BAA-679 / EGD-e) protein is Probable endonuclease 4.